Reading from the N-terminus, the 514-residue chain is MSTECLKPQTGGPQSQSLSQGGQYGALASGTCLPPSTPVPWSLPRWRAYLAAAVLCYINLLNYMNWFIIPGVLLDVQKYFHISDSHAGLLQTVFISCLLVSAPVFGYLGDRYNRKAILSFGILLWSGAGLSSSFISYQYSWLFFLSRGFVGTGAASYSTIAPTVLGDLFVKDQRTCALAVFYIFIPVGSGLGYVLGSTVAELTGNWRWALRLMPCLDAMALALLILLVPDVPRGAAEKQGEVAVRAPRSSWCEDVRYLGRNWSFVFSTLGVTAIAFVTGALGFWAPKFLFEARVVHGLQLPCFQEQCHSQDSLIFGALTVATGIIGVMLGAEASRRYKKVNPRAEPLICASSLFATAPCLYLALILASRTLLASYVFLALGELLLSCNWAVVADILLSVVVPRCRGTAEALQITVAHVLGDAGSPYLTGLISSVLQAERPDSYLQHFLSLQHSFLCCAFAIVLGGGFFLLTALHLEKDQARARQPGKGTLDSKDIASRNTESQGLLSGTSTPTE.

Residues 1–22 form a disordered region; it reads MSTECLKPQTGGPQSQSLSQGG. The span at 9–21 shows a compositional bias: low complexity; sequence QTGGPQSQSLSQG. 12 helical membrane passes run 54–74, 88–108, 116–136, 149–169, 176–196, 212–232, 264–284, 313–333, 347–367, 376–396, 415–435, and 453–473; these read VLCY…GVLL, GLLQ…FGYL, AILS…SFIS, FVGT…GDLF, CALA…YVLG, LMPC…PDVP, FVFS…LGFW, LIFG…GAEA, LICA…LILA, VFLA…ADIL, VAHV…SSVL, and SFLC…LTAL. Residues 482 to 514 are disordered; sequence ARQPGKGTLDSKDIASRNTESQGLLSGTSTPTE. Over residues 497–514 the composition is skewed to polar residues; sequence SRNTESQGLLSGTSTPTE.

This sequence belongs to the major facilitator superfamily. Spinster (TC 2.A.1.49) family.

It is found in the membrane. Sphingolipid transporter. The polypeptide is Protein spinster homolog 3 (Spns3) (Mus musculus (Mouse)).